The primary structure comprises 340 residues: Probable rRNA-processing protein EBP2 homolog (340 aa).

A compositionally biased stretch (basic residues) spans 1–10 (MVRKMNKLAK). Disordered stretches follow at residues 1-59 (MVRK…DDDE) and 245-340 (HGLD…RGRR). 2 stretches are compositionally biased toward acidic residues: residues 23 to 37 (PESD…FDNA) and 46 to 59 (MDIE…DDDE). A coiled-coil region spans residues 206–245 (QKEVLAAKNTEKKNLAEAVKKHKKGMKQQLEDMLNNVKRH). Gly residues-rich tracts occupy residues 264-277 (GRGG…GRGG) and 318-333 (PRGG…GRGG).

This sequence belongs to the EBP2 family.

It is found in the nucleus. It localises to the nucleolus. Required for the processing of the 27S pre-rRNA. This Caenorhabditis elegans protein is Probable rRNA-processing protein EBP2 homolog.